The primary structure comprises 136 residues: Cytochrome c-550 (136 aa).

The signal sequence occupies residues 1–28; it reads MTKLTFGALVALAMTAAASTAMSSKAMA. Residues C41, C44, H45, and M107 each contribute to the heme c site.

Binds 1 heme c group covalently per subunit. In terms of processing, the N-terminus is blocked.

It localises to the periplasm. Its function is as follows. Plays a role in bacteroid respiration under conditions of oxygen limitation. Required for electron-transfer during denitrification. In Bradyrhizobium diazoefficiens (strain JCM 10833 / BCRC 13528 / IAM 13628 / NBRC 14792 / USDA 110), this protein is Cytochrome c-550 (cycA).